Here is a 37-residue protein sequence, read N- to C-terminus: Large ribosomal subunit protein bL36B (37 aa).

This sequence belongs to the bacterial ribosomal protein bL36 family.

This Paenarthrobacter aurescens (strain TC1) protein is Large ribosomal subunit protein bL36B.